The primary structure comprises 230 residues: Nucleoside diphosphate kinase 2, chloroplastic (230 aa).

The transit peptide at 1–64 (MEAMAVFSGS…SYPKTFRTRS (64 aa)) directs the protein to the chloroplast. The ATP site is built by lysine 90, phenylalanine 138, arginine 166, threonine 172, arginine 183, and asparagine 193. Catalysis depends on histidine 196, which acts as the Pros-phosphohistidine intermediate.

The protein belongs to the NDK family. Requires Mg(2+) as cofactor.

It is found in the plastid. The protein localises to the chloroplast. It carries out the reaction a 2'-deoxyribonucleoside 5'-diphosphate + ATP = a 2'-deoxyribonucleoside 5'-triphosphate + ADP. It catalyses the reaction a ribonucleoside 5'-diphosphate + ATP = a ribonucleoside 5'-triphosphate + ADP. Functionally, major role in the synthesis of nucleoside triphosphates other than ATP. The ATP gamma phosphate is transferred to the NDP beta phosphate via a ping-pong mechanism, using a phosphorylated active-site intermediate. The polypeptide is Nucleoside diphosphate kinase 2, chloroplastic (NDPK2) (Pisum sativum (Garden pea)).